The chain runs to 226 residues: Ribonuclease 3 (226 aa).

An RNase III domain is found at 7–134; that stretch reads KQNLKKKYGI…FNGALFLDQG (128 aa). E47 contacts Mg(2+). D51 is a catalytic residue. Mg(2+) is bound by residues D120 and E123. E123 is an active-site residue. The region spanning 160-226 is the DRBM domain; sequence DYKTELQERL…AAQAALDKNK (67 aa). Residues 201 to 226 form a disordered region; it reads KVSEGQGRNKKAAEQQAAQAALDKNK. The span at 214-226 shows a compositional bias: low complexity; the sequence is EQQAAQAALDKNK.

Belongs to the ribonuclease III family. Homodimer. Requires Mg(2+) as cofactor.

Its subcellular location is the cytoplasm. It carries out the reaction Endonucleolytic cleavage to 5'-phosphomonoester.. In terms of biological role, digests double-stranded RNA. Involved in the processing of primary rRNA transcript to yield the immediate precursors to the large and small rRNAs (23S and 16S). Processes some mRNAs, and tRNAs when they are encoded in the rRNA operon. Processes pre-crRNA and tracrRNA of type II CRISPR loci if present in the organism. This Lactobacillus johnsonii (strain CNCM I-12250 / La1 / NCC 533) protein is Ribonuclease 3.